The chain runs to 372 residues: tRNA-specific 2-thiouridylase MnmA (372 aa).

Residues 9–16 (GMSGGVDS) and Met-35 each bind ATP. Residues 95–97 (NPD) form an interaction with target base in tRNA region. Cys-100 (nucleophile) is an active-site residue. Residues Cys-100 and Cys-201 are joined by a disulfide bond. Residue Gly-124 participates in ATP binding. The tract at residues 151–153 (KDQ) is interaction with tRNA. The Cysteine persulfide intermediate role is filled by Cys-201. The interaction with tRNA stretch occupies residues 317 to 318 (RY).

This sequence belongs to the MnmA/TRMU family.

The protein localises to the cytoplasm. The catalysed reaction is S-sulfanyl-L-cysteinyl-[protein] + uridine(34) in tRNA + AH2 + ATP = 2-thiouridine(34) in tRNA + L-cysteinyl-[protein] + A + AMP + diphosphate + H(+). In terms of biological role, catalyzes the 2-thiolation of uridine at the wobble position (U34) of tRNA, leading to the formation of s(2)U34. The polypeptide is tRNA-specific 2-thiouridylase MnmA (Janthinobacterium sp. (strain Marseille) (Minibacterium massiliensis)).